We begin with the raw amino-acid sequence, 284 residues long: Bifunctional protein FolD (284 aa).

NADP(+) is bound by residues 166–168 and isoleucine 232; that span reads GAS.

Belongs to the tetrahydrofolate dehydrogenase/cyclohydrolase family. Homodimer.

The catalysed reaction is (6R)-5,10-methylene-5,6,7,8-tetrahydrofolate + NADP(+) = (6R)-5,10-methenyltetrahydrofolate + NADPH. It catalyses the reaction (6R)-5,10-methenyltetrahydrofolate + H2O = (6R)-10-formyltetrahydrofolate + H(+). It functions in the pathway one-carbon metabolism; tetrahydrofolate interconversion. Its function is as follows. Catalyzes the oxidation of 5,10-methylenetetrahydrofolate to 5,10-methenyltetrahydrofolate and then the hydrolysis of 5,10-methenyltetrahydrofolate to 10-formyltetrahydrofolate. This chain is Bifunctional protein FolD, found in Shewanella pealeana (strain ATCC 700345 / ANG-SQ1).